The following is an 859-amino-acid chain: Bifunctional uridylyltransferase/uridylyl-removing enzyme (859 aa).

Positions 1–325 are uridylyltransferase; the sequence is MSAHAAPSPE…PATSGITRVL (325 aa). A uridylyl-removing region spans residues 326–682; that stretch reads SHDRFVEKQG…ARPSPIGDAL (357 aa). The region spanning 444 to 566 is the HD domain; it reads VDQHILMVLR…VGNERYLTAL (123 aa). 2 ACT domains span residues 683–762 and 791–859; these read QVLV…PEPS and ILSV…AIAV.

The protein belongs to the GlnD family. Mg(2+) is required as a cofactor.

The catalysed reaction is [protein-PII]-L-tyrosine + UTP = [protein-PII]-uridylyl-L-tyrosine + diphosphate. It carries out the reaction [protein-PII]-uridylyl-L-tyrosine + H2O = [protein-PII]-L-tyrosine + UMP + H(+). Uridylyltransferase (UTase) activity is inhibited by glutamine, while glutamine activates uridylyl-removing (UR) activity. Its function is as follows. Modifies, by uridylylation and deuridylylation, the PII regulatory proteins (GlnB and homologs), in response to the nitrogen status of the cell that GlnD senses through the glutamine level. Under low glutamine levels, catalyzes the conversion of the PII proteins and UTP to PII-UMP and PPi, while under higher glutamine levels, GlnD hydrolyzes PII-UMP to PII and UMP (deuridylylation). Thus, controls uridylylation state and activity of the PII proteins, and plays an important role in the regulation of nitrogen fixation and metabolism. The polypeptide is Bifunctional uridylyltransferase/uridylyl-removing enzyme (Burkholderia vietnamiensis (strain G4 / LMG 22486) (Burkholderia cepacia (strain R1808))).